An 89-amino-acid chain; its full sequence is Myrmicitoxin(1)-Pr2a (89 aa).

A signal peptide spans 1 to 23 (MEIPKLLYIAVIAIGLSGSLTCA). The propeptide occupies 24–61 (TPLANPWADPEAEANPEAKAIAEATAEAIAEALAEPEP). At asparagine 88 the chain carries Asparagine amide.

This sequence belongs to the formicidae venom clade 1 family. Expressed by the venom gland.

Its subcellular location is the secreted. Vertebrate-selective toxin that causes pain by targeting voltage-gated sodium channels. The sequence is that of Myrmicitoxin(1)-Pr2a from Pogonomyrmex rugosus (Desert harvester ant).